A 313-amino-acid polypeptide reads, in one-letter code: uncharacterized protein (313 aa).

This is an uncharacterized protein from Orgyia pseudotsugata multicapsid polyhedrosis virus (OpMNPV).